Reading from the N-terminus, the 123-residue chain is Small ribosomal subunit protein uS12cz/uS12cy/uS12cx/uS12w (123 aa).

Over residues 1 to 13 (MPTSNQLLRNSRQ) the composition is skewed to polar residues. A disordered region spans residues 1 to 30 (MPTSNQLLRNSRQPVRKTKKTPALRGCPQR). Basic residues predominate over residues 14–30 (PVRKTKKTPALRGCPQR).

This sequence belongs to the universal ribosomal protein uS12 family. In terms of assembly, part of the 30S ribosomal subunit.

It localises to the plastid. It is found in the chloroplast. With S4 and S5 plays an important role in translational accuracy. Located at the interface of the 30S and 50S subunits. The sequence is that of Small ribosomal subunit protein uS12cz/uS12cy/uS12cx/uS12w (rps12-A) from Pelargonium hortorum (Common geranium).